A 683-amino-acid polypeptide reads, in one-letter code: Synaptic vesicle glycoprotein 2B (683 aa).

The segment covering 1-10 (MDDYRYRDNY) has biased composition (basic and acidic residues). The disordered stretch occupies residues 1–72 (MDDYRYRDNY…QTKMAPSRAD (72 aa)). The Cytoplasmic segment spans residues 1-110 (MDDYRYRDNY…ECGHGRFQWT (110 aa)). S33 carries the phosphoserine modification. Position 36 is a phosphothreonine (T36). The helical transmembrane segment at 111–131 (LFFVLVLALMADGVEVFVVSF) threads the bilayer. Residues 132–148 (ALPSAEKDMCLSSSKKG) are Extracellular-facing. The chain crosses the membrane as a helical span at residues 149–169 (MLGLIVYLGMMAGAFILGGLA). Residues 170–182 (DKLGRKKVLSMSL) lie on the Cytoplasmic side of the membrane. The chain crosses the membrane as a helical span at residues 183–203 (AINASFASLSSFVQGYGAFLF). Residues 204-205 (CR) are Extracellular-facing. The chain crosses the membrane as a helical span at residues 206–226 (LISGIGIGGSLPIVFAYFSEF). Topologically, residues 227–237 (LSREKRGEHLS) are cytoplasmic. A helical transmembrane segment spans residues 238 to 258 (WLGIFWMTGGIYASAMAWSII). At 259–277 (PHYGWGFSMGTNYHFHSWR) the chain is on the extracellular side. Residues 278 to 298 (VFVIVCALPATVSMVALKFMP) form a helical membrane-spanning segment. The Cytoplasmic portion of the chain corresponds to 299 to 390 (ESPRFLLEMG…CVMGPYRMNT (92 aa)). Residues 391 to 411 (LILAVVWFTMALSYYGLTVWF) form a helical membrane-spanning segment. At 412 to 535 (PDMIRYFQDE…CHMDFEEDND (124 aa)) the chain is on the extracellular side. Y423 carries the post-translational modification Phosphotyrosine. Residues N441, N491, and N516 are each glycosylated (N-linked (GlcNAc...) asparagine). A helical transmembrane segment spans residues 536-556 (FLIYLVSFLGSLSVLPGNIIS). The Cytoplasmic segment spans residues 557–565 (ALLMDRIGR). A helical transmembrane segment spans residues 566 to 586 (LKMIGGSMLISAVCCFFLFFG). Residues 587–592 (NSESAM) lie on the Extracellular side of the membrane. Residues 593–613 (IGWQCLFCGTSIAAWNALDVI) traverse the membrane as a helical segment. The Cytoplasmic portion of the chain corresponds to 614 to 626 (TVELYPTNQRATA). Residues 627 to 649 (FGILNGLCKLGAILGNTIFASFV) form a helical membrane-spanning segment. Residues 650–653 (GITK) are Extracellular-facing. A helical transmembrane segment spans residues 654–672 (VVPILLAAASLVGGGLVAL). Residues 673 to 683 (RLPETREQVLM) are Cytoplasmic-facing.

This sequence belongs to the major facilitator superfamily. As to quaternary structure, interacts with SYT1 in a calcium-independent manner. Forms a complex with SYT1, syntaxin-1 and SNAP25. In terms of assembly, (Microbial infection) Interacts with C.botulinum neurotoxin type A1 and type A2 (BoNT/A, botA). Interaction is improved by glycosylation of SV2. (Microbial infection) Interacts with C.botulinum neurotoxin type D (BoNT/D, botD). As to quaternary structure, (Microbial infection) Interacts with C.botulinum neurotoxin type E (BoNT/E). Interaction requires glycosylation of SV2 proteins. In terms of assembly, (Microbial infection) Interacts with C.botulinum neurotoxin type F (BoNT/F). Interaction requires glycosylation of SV2 proteins. Post-translationally, N-glycosylated. In terms of processing, the N-terminal cytoplasmic domain is phosphorylated by CK1. Widely expressed throughout the brain. Specifically expressed by pinealocytes in the pineal gland. Also detected in testis (at protein level). Specifically expressed in neural tissues. Expressed in the spinal cord and in all brain regions with a stronger expression in hippocampus and cortex.

It localises to the cytoplasmic vesicle. It is found in the secretory vesicle. The protein localises to the synaptic vesicle membrane. Its subcellular location is the acrosome. Probably plays a role in the control of regulated secretion in neural and endocrine cells. Functionally, (Microbial infection) Receptor for C.botulinum neurotoxin type A (BoNT/A, botA); the toxin binds via extracellular loop 4. Restores uptake of BoNT/A in mouse and rat cells that are deleted for SV2 receptor. Glycosylation of SV2B is not essential for receptor activity, but enhances the interaction. Also serves as a receptor for the closely related C.botulinum neurotoxin type A2; glycosylation is not essential but enhances the interaction. Its function is as follows. (Microbial infection) Possible receptor for C.botulinum neurotoxin type D (BoNT/D, botD); BoNT/D does not bind to extracellular loop 4 as do BoNT/A and BoNT/E. Another group does not find a convincing interaction with SV2. In terms of biological role, (Microbial infection) Receptor for C.botulinum neurotoxin type E (BoNT/E); the toxin probably binds via extracellular loop 4. Restores uptake of BoNT/E in mouse cells that are deleted for SV2 receptor. Glycosylation of SV2B is not essential for receptor activity, but enhances the interaction. (Microbial infection) Receptor for C.botulinum neurotoxin type F (BoNT/F); binding requires glycosylation of this protein. In Rattus norvegicus (Rat), this protein is Synaptic vesicle glycoprotein 2B (Sv2b).